A 725-amino-acid polypeptide reads, in one-letter code: Endoglucanase G (725 aa).

The signal sequence occupies residues 1-35 (MLKTKRKLTKAIGVALSISILSSLVSFIPQTNTYA). Asp93 acts as the Nucleophile in catalysis. Catalysis depends on residues His408, Asp446, and Glu455. The CBM3 domain occupies 489 to 650 (ITNDEVIIKA…GVKVFGNEPA (162 aa)). In terms of domain architecture, Dockerin spans 658 to 724 (PEILYGDVNS…LLGTITQLPQ (67 aa)).

It belongs to the glycosyl hydrolase 9 (cellulase E) family.

It carries out the reaction Endohydrolysis of (1-&gt;4)-beta-D-glucosidic linkages in cellulose, lichenin and cereal beta-D-glucans.. It participates in glycan metabolism; cellulose degradation. In terms of biological role, the biological conversion of cellulose to glucose generally requires three types of hydrolytic enzymes: (1) Endoglucanases which cut internal beta-1,4-glucosidic bonds; (2) Exocellobiohydrolases that cut the disaccharide cellobiose from the non-reducing end of the cellulose polymer chain; (3) Beta-1,4-glucosidases which hydrolyze the cellobiose and other short cello-oligosaccharides to glucose. The polypeptide is Endoglucanase G (celCCG) (Ruminiclostridium cellulolyticum (strain ATCC 35319 / DSM 5812 / JCM 6584 / H10) (Clostridium cellulolyticum)).